The primary structure comprises 93 residues: Microcin N immunity protein (93 aa).

The next 3 membrane-spanning stretches (helical) occupy residues 3–23 (FLNFAFSPVFFSIMACYFIVW), 36–56 (LSIIIISFLICFIYPWLNYKI), and 68–88 (LFCFLSSLVAVVINLIVYFIL).

The protein belongs to the MceB microcin immunity protein family.

Its subcellular location is the cell inner membrane. Probably able to protect the producing cell against microcin N (microcin 24). In Escherichia coli, this protein is Microcin N immunity protein.